The primary structure comprises 90 residues: Small ribosomal subunit protein bS16 (90 aa).

Belongs to the bacterial ribosomal protein bS16 family.

This Heliobacterium modesticaldum (strain ATCC 51547 / Ice1) protein is Small ribosomal subunit protein bS16.